The sequence spans 186 residues: Transposon Tn501 resolvase (186 aa).

The Resolvase/invertase-type recombinase catalytic domain maps to 4–137 (HRIGYVRVSS…EGITLAKQRG (134 aa)). Catalysis depends on Ser12, which acts as the O-(5'-phospho-DNA)-serine intermediate. The interval 17–38 (NPERQLEQTQVSKVFTDKASGK) is disordered. Residues 164–183 (KAQLAREFNISRETLYQYLR) constitute a DNA-binding region (H-T-H motif).

The protein belongs to the site-specific recombinase resolvase family.

In terms of biological role, resolvase catalyzes the resolution (a site-specific recombination) of the cointegrated replicon to yield the final transposition products. This is Transposon Tn501 resolvase (tnpR) from Pseudomonas aeruginosa.